The following is a 172-amino-acid chain: Adenine phosphoribosyltransferase (172 aa).

The protein belongs to the purine/pyrimidine phosphoribosyltransferase family. As to quaternary structure, homodimer.

The protein resides in the cytoplasm. It catalyses the reaction AMP + diphosphate = 5-phospho-alpha-D-ribose 1-diphosphate + adenine. The protein operates within purine metabolism; AMP biosynthesis via salvage pathway; AMP from adenine: step 1/1. In terms of biological role, catalyzes a salvage reaction resulting in the formation of AMP, that is energically less costly than de novo synthesis. The polypeptide is Adenine phosphoribosyltransferase (Clostridium novyi (strain NT)).